Consider the following 42-residue polypeptide: Mating-type M-specific polypeptide Mi (42 aa).

It is found in the cytoplasm. The protein resides in the nucleus. Functionally, mating type proteins are sequence specific DNA-binding proteins that act as master switches in yeast differentiation by controlling gene expression in a cell type-specific fashion. Required for meiosis, but plays no role in conjugation. This is Mating-type M-specific polypeptide Mi (mat1-Mi) from Schizosaccharomyces pombe (strain 972 / ATCC 24843) (Fission yeast).